The chain runs to 475 residues: UDP-N-acetylmuramate--L-alanine ligase (475 aa).

114–120 (GTHGKTT) is a binding site for ATP.

Belongs to the MurCDEF family.

It is found in the cytoplasm. It catalyses the reaction UDP-N-acetyl-alpha-D-muramate + L-alanine + ATP = UDP-N-acetyl-alpha-D-muramoyl-L-alanine + ADP + phosphate + H(+). The protein operates within cell wall biogenesis; peptidoglycan biosynthesis. Cell wall formation. The chain is UDP-N-acetylmuramate--L-alanine ligase from Bartonella tribocorum (strain CIP 105476 / IBS 506).